Reading from the N-terminus, the 510-residue chain is NAD(P)H-quinone oxidoreductase subunit 2 A, chloroplastic (510 aa).

14 helical membrane passes run 31-51 (FIFP…IDLT), 59-79 (WFYF…LFRW), 99-119 (IFQF…VEYI), 124-144 (MAIT…MFLC), 149-169 (LITI…LSGY), 184-204 (LLMG…LYGL), 229-249 (ISIA…LAPF), 261-281 (PTPV…ALAT), 295-315 (WHLL…LLAI), 323-343 (MLAY…IVGD), 354-374 (YMLF…LFGL), 395-415 (ALSL…AGFF), 418-438 (LYLF…IGLL), and 484-504 (MTVC…ILAI).

The protein belongs to the complex I subunit 2 family. NDH is composed of at least 16 different subunits, 5 of which are encoded in the nucleus.

Its subcellular location is the plastid. The protein resides in the chloroplast thylakoid membrane. The catalysed reaction is a plastoquinone + NADH + (n+1) H(+)(in) = a plastoquinol + NAD(+) + n H(+)(out). It carries out the reaction a plastoquinone + NADPH + (n+1) H(+)(in) = a plastoquinol + NADP(+) + n H(+)(out). Its function is as follows. NDH shuttles electrons from NAD(P)H:plastoquinone, via FMN and iron-sulfur (Fe-S) centers, to quinones in the photosynthetic chain and possibly in a chloroplast respiratory chain. The immediate electron acceptor for the enzyme in this species is believed to be plastoquinone. Couples the redox reaction to proton translocation, and thus conserves the redox energy in a proton gradient. This Saccharum hybrid (Sugarcane) protein is NAD(P)H-quinone oxidoreductase subunit 2 A, chloroplastic.